The sequence spans 256 residues: Triosephosphate isomerase (256 aa).

10–12 (NWK) is a binding site for substrate. The active-site Electrophile is the His-99. The Proton acceptor role is filled by Glu-171. Residues Gly-177, Ser-216, and 237-238 (GG) each bind substrate.

The protein belongs to the triosephosphate isomerase family. As to quaternary structure, homodimer.

Its subcellular location is the cytoplasm. It catalyses the reaction D-glyceraldehyde 3-phosphate = dihydroxyacetone phosphate. Its pathway is carbohydrate biosynthesis; gluconeogenesis. It participates in carbohydrate degradation; glycolysis; D-glyceraldehyde 3-phosphate from glycerone phosphate: step 1/1. Functionally, involved in the gluconeogenesis. Catalyzes stereospecifically the conversion of dihydroxyacetone phosphate (DHAP) to D-glyceraldehyde-3-phosphate (G3P). This Colwellia psychrerythraea (strain 34H / ATCC BAA-681) (Vibrio psychroerythus) protein is Triosephosphate isomerase.